A 393-amino-acid chain; its full sequence is NAD(P)H-quinone oxidoreductase subunit H, chloroplastic (393 aa).

It belongs to the complex I 49 kDa subunit family. In terms of assembly, NDH is composed of at least 16 different subunits, 5 of which are encoded in the nucleus.

It localises to the plastid. Its subcellular location is the chloroplast thylakoid membrane. The enzyme catalyses a plastoquinone + NADH + (n+1) H(+)(in) = a plastoquinol + NAD(+) + n H(+)(out). It carries out the reaction a plastoquinone + NADPH + (n+1) H(+)(in) = a plastoquinol + NADP(+) + n H(+)(out). In terms of biological role, NDH shuttles electrons from NAD(P)H:plastoquinone, via FMN and iron-sulfur (Fe-S) centers, to quinones in the photosynthetic chain and possibly in a chloroplast respiratory chain. The immediate electron acceptor for the enzyme in this species is believed to be plastoquinone. Couples the redox reaction to proton translocation, and thus conserves the redox energy in a proton gradient. In Fagopyrum esculentum subsp. ancestrale (Wild buckwheat), this protein is NAD(P)H-quinone oxidoreductase subunit H, chloroplastic.